The following is a 125-amino-acid chain: Ribosome-binding factor A (125 aa).

Belongs to the RbfA family. In terms of assembly, monomer. Binds 30S ribosomal subunits, but not 50S ribosomal subunits or 70S ribosomes.

It is found in the cytoplasm. One of several proteins that assist in the late maturation steps of the functional core of the 30S ribosomal subunit. Associates with free 30S ribosomal subunits (but not with 30S subunits that are part of 70S ribosomes or polysomes). Required for efficient processing of 16S rRNA. May interact with the 5'-terminal helix region of 16S rRNA. This chain is Ribosome-binding factor A, found in Acidovorax sp. (strain JS42).